We begin with the raw amino-acid sequence, 134 residues long: Large ribosomal subunit protein bL20 (134 aa).

The protein belongs to the bacterial ribosomal protein bL20 family.

Functionally, binds directly to 23S ribosomal RNA and is necessary for the in vitro assembly process of the 50S ribosomal subunit. It is not involved in the protein synthesizing functions of that subunit. This Allorhizobium ampelinum (strain ATCC BAA-846 / DSM 112012 / S4) (Agrobacterium vitis (strain S4)) protein is Large ribosomal subunit protein bL20.